Here is a 435-residue protein sequence, read N- to C-terminus: 3-phosphoshikimate 1-carboxyvinyltransferase (435 aa).

Lys-22, Ser-23, and Arg-27 together coordinate 3-phosphoshikimate. Lys-22 serves as a coordination point for phosphoenolpyruvate. Phosphoenolpyruvate-binding residues include Gly-94 and Arg-122. 3-phosphoshikimate-binding residues include Ser-166, Gln-168, Asp-314, and Lys-341. Gln-168 is a phosphoenolpyruvate binding site. Asp-314 serves as the catalytic Proton acceptor. The phosphoenolpyruvate site is built by Arg-345 and Arg-388.

This sequence belongs to the EPSP synthase family. As to quaternary structure, monomer.

The protein resides in the cytoplasm. It catalyses the reaction 3-phosphoshikimate + phosphoenolpyruvate = 5-O-(1-carboxyvinyl)-3-phosphoshikimate + phosphate. Its pathway is metabolic intermediate biosynthesis; chorismate biosynthesis; chorismate from D-erythrose 4-phosphate and phosphoenolpyruvate: step 6/7. Functionally, catalyzes the transfer of the enolpyruvyl moiety of phosphoenolpyruvate (PEP) to the 5-hydroxyl of shikimate-3-phosphate (S3P) to produce enolpyruvyl shikimate-3-phosphate and inorganic phosphate. This is 3-phosphoshikimate 1-carboxyvinyltransferase from Vesicomyosocius okutanii subsp. Calyptogena okutanii (strain HA).